The chain runs to 558 residues: INCREASED PETAL GROWTH ANISOTROPY 1-like protein 2 (558 aa).

Over residues 1-15 the composition is skewed to low complexity; that stretch reads MSRISTTSTTPSRVR. The segment at 1-54 is disordered; sequence MSRISTTSTTPSRVRAANSHYSVISKPRAQDDNGLTGGKPKSSGYDVKNDPAKR. Positions 104–180 form a coiled coil; sequence VMATAAAEDE…EAKISSLSSN (77 aa). Residues 207 to 285 are disordered; it reads KVKKEVAVES…AARAQKSPPV (79 aa). 2 stretches are compositionally biased toward pro residues: residues 221–236 and 256–272; these read PPSP…PPLP and FAPP…PPRP. Positions 392–448 form a coiled coil; sequence KADTLQEAAVEYRELKKLEKELSSYSDDPNIHYGVALKKMANLLDKSEQRIRRLVRL.

Belongs to the IPGA1 family.

It is found in the cytoplasm. Its subcellular location is the cytoskeleton. In terms of biological role, microtubule-associated protein probably involved in the regulation of microtubule organization. The chain is INCREASED PETAL GROWTH ANISOTROPY 1-like protein 2 from Arabidopsis thaliana (Mouse-ear cress).